A 282-amino-acid chain; its full sequence is Nucleotide-binding protein PXO_02223 (282 aa).

5–12 (GLSGSGKS) is an ATP binding site. 57-60 (DVRS) lines the GTP pocket.

Belongs to the RapZ-like family.

Functionally, displays ATPase and GTPase activities. The sequence is that of Nucleotide-binding protein PXO_02223 from Xanthomonas oryzae pv. oryzae (strain PXO99A).